Here is a 364-residue protein sequence, read N- to C-terminus: Cobalt-precorrin-5B C(1)-methyltransferase (364 aa).

Belongs to the CbiD family.

The catalysed reaction is Co-precorrin-5B + S-adenosyl-L-methionine = Co-precorrin-6A + S-adenosyl-L-homocysteine. It participates in cofactor biosynthesis; adenosylcobalamin biosynthesis; cob(II)yrinate a,c-diamide from sirohydrochlorin (anaerobic route): step 6/10. In terms of biological role, catalyzes the methylation of C-1 in cobalt-precorrin-5B to form cobalt-precorrin-6A. The protein is Cobalt-precorrin-5B C(1)-methyltransferase of Pseudomonas putida (strain ATCC 700007 / DSM 6899 / JCM 31910 / BCRC 17059 / LMG 24140 / F1).